A 468-amino-acid polypeptide reads, in one-letter code: Cyclin-dependent kinase 14 (468 aa).

3 positions are modified to phosphoserine: S24, S77, and S94. Residues 102–131 (FKSSSAGKESPKVRRHSSPSSPTSPKFGKA) form a disordered region. S133 bears the Phosphoserine mark. Residues 134–418 (YEKLEKLGEG…AQAALSHEYF (285 aa)) form the Protein kinase domain. Residues 140 to 148 (LGEGSYATV) and K163 contribute to the ATP site. D255 acts as the Proton acceptor in catalysis. A disordered region spans residues 448-468 (ESMRAFGKNSSYGKSLSNSKH). The span at 455 to 468 (KNSSYGKSLSNSKH) shows a compositional bias: polar residues.

Belongs to the protein kinase superfamily. CMGC Ser/Thr protein kinase family. CDC2/CDKX subfamily. As to quaternary structure, found in a complex with LRP6, CCNY and CAPRIN2 during G2/M stage; CAPRIN2 functions as a scaffold for the complex by binding to CCNY via its N terminus and to CDK14 via its C terminus. Interacts with CCNY; CCNY mediates its recruitment to the plasma membrane and promotes phosphorylation of LRP6. Interacts with CCDN3 and CDKN1A. Interacts with SEPT8. Interacts with 14-3-3 proteina YWHAB, YWHAE, YWHAH and YWHAQ.

The protein resides in the cell membrane. It localises to the cytoplasm. The protein localises to the nucleus. The catalysed reaction is L-seryl-[protein] + ATP = O-phospho-L-seryl-[protein] + ADP + H(+). It carries out the reaction L-threonyl-[protein] + ATP = O-phospho-L-threonyl-[protein] + ADP + H(+). Serine/threonine-protein kinase activity is promoted by associated cyclins CCDN3 and CCNY and repressed by CDKN1A. Its function is as follows. Serine/threonine-protein kinase involved in the control of the eukaryotic cell cycle, whose activity is controlled by an associated cyclin. Acts as a cell-cycle regulator of Wnt signaling pathway during G2/M phase by mediating the phosphorylation of LRP6 at 'Ser-1490', leading to the activation of the Wnt signaling pathway. Acts as a regulator of cell cycle progression and cell proliferation via its interaction with CCDN3. Phosphorylates RB1 in vitro, however the relevance of such result remains to be confirmed in vivo. May also play a role in meiosis, neuron differentiation and may indirectly act as a negative regulator of insulin-responsive glucose transport. This chain is Cyclin-dependent kinase 14 (CDK14), found in Oryctolagus cuniculus (Rabbit).